The chain runs to 243 residues: TIGR03089 family protein (243 aa).

Belongs to the TIGR03089 family.

The sequence is that of TIGR03089 family protein from Mycobacterium tuberculosis (strain ATCC 25618 / H37Rv).